The primary structure comprises 124 residues: Quinol oxidase subunit 4 (124 aa).

The next 3 helical transmembrane spans lie at 16–36, 44–64, and 78–98; these read IVGF…AVYT, LWII…MFMH, and TLFG…IFAA.

Belongs to the cytochrome c oxidase bacterial subunit 4 family.

Its subcellular location is the cell membrane. It catalyses the reaction 2 a quinol + O2 = 2 a quinone + 2 H2O. Catalyzes quinol oxidation with the concomitant reduction of oxygen to water. Major component for energy conversion during vegetative growth. This chain is Quinol oxidase subunit 4 (qoxD), found in Bacillus spizizenii (strain ATCC 23059 / NRRL B-14472 / W23) (Bacillus subtilis subsp. spizizenii).